Here is a 556-residue protein sequence, read N- to C-terminus: Protein trichome birefringence-like 1 (556 aa).

A helical; Signal-anchor for type II membrane protein membrane pass occupies residues threonine 38–proline 58. A GDS motif motif is present at residues glycine 269–serine 271. Residues aspartate 514–asparagine 528 carry the DCXHWCLPGXXDXWN motif motif.

Belongs to the PC-esterase family. TBL subfamily. In terms of tissue distribution, not expressed in trichomes.

It localises to the membrane. Can complement TBR and is therefore functionally equivalent, but may work in different tissue. May act as a bridging protein that binds pectin and other cell wall polysaccharides. Probably involved in maintaining esterification of pectins. May be involved in the specific O-acetylation of cell wall polymers. This is Protein trichome birefringence-like 1 (TBL1) from Arabidopsis thaliana (Mouse-ear cress).